The chain runs to 436 residues: EPS I polysaccharide export inner membrane protein EpsE (436 aa).

Helical transmembrane passes span 20–40 (VLGLGAAVASRGAVFLVNIML), 49–69 (FGLFSYAYVTALNLGLFLATG), 91–111 (LCAFIVLLVALIAVAATALYL), 132–152 (MAAIVLIATAFTQALQAFLYA), 160–180 (ASVSIGAALLLLAMLWTMGPI), 184–204 (VVALVIFLAINAGAAASQLVI), 234–254 (VLTTSMGAPVHWICLSMLAAM), 261–281 (LALFSVAFQWYIAITFIPATL), 307–327 (ALLFGGGLSLALGCMAFLLAG), 341–361 (AAASMRSLAVAAALCGISVLL), 375–395 (FAMAAVYSVIYVAAAYLALRL), and 396–416 (GYGAPSIGLAMSAAYCCLILF).

The protein to E.coli bicyclomycin resistance protein (BCR).

It is found in the cell inner membrane. In terms of biological role, probably involved in polymerization and/or export of exopolysaccharide EPS I which functions as a virulence factor. May play a role in export of EPS I or its intermediates across the membranes. This Ralstonia nicotianae (strain ATCC BAA-1114 / GMI1000) (Ralstonia solanacearum) protein is EPS I polysaccharide export inner membrane protein EpsE (epsE).